A 99-amino-acid polypeptide reads, in one-letter code: Transcriptional repressor PagR (99 aa).

In terms of domain architecture, HTH arsR-type spans 9–99 (IEYMSLEDDA…GIIKLLNPIQ (91 aa)). A DNA-binding region (H-T-H motif) is located at residues 43 to 62 (NVTQIIQILKLPQSTVSQHL).

Represses the expression of the pagA and atxA genes. The sequence is that of Transcriptional repressor PagR (pagR) from Bacillus anthracis.